The chain runs to 580 residues: Glutamine--tRNA ligase (580 aa).

The 'HIGH' region motif lies at 41-51 (PEPNGYLHIGH). ATP contacts are provided by residues 42 to 44 (EPN) and 48 to 54 (HIGHAKA). Residues D74 and Y218 each contribute to the L-glutamine site. Residues T237, 285–286 (RL), and 293–295 (MSK) each bind ATP. The short motif at 292–296 (VMSKR) is the 'KMSKS' region element.

The protein belongs to the class-I aminoacyl-tRNA synthetase family. As to quaternary structure, monomer.

It localises to the cytoplasm. It catalyses the reaction tRNA(Gln) + L-glutamine + ATP = L-glutaminyl-tRNA(Gln) + AMP + diphosphate. In Xylella fastidiosa (strain 9a5c), this protein is Glutamine--tRNA ligase.